The following is a 613-amino-acid chain: Pentatricopeptide repeat-containing protein At2g45350, chloroplastic (613 aa).

13 PPR repeats span residues 85–119, 120–154, 155–185, 186–216, 219–250, 251–285, 286–312, 313–347, 349–383, 384–414, 415–449, 450–480, and 486–516; these read DPFLWNAVIKSHSHGKDPRQALLLLCLMLENGVSV, DKFSLSLVLKACSRLGFVKGGMQIHGFLKKTGLWS, DLFLQNCLIGLYLKCGCLGLSRQMFDRMPKR, DSVSYNSMIDGYVKCGLIVSARELFDLMPME, NLISWNSMISGYAQTSDGVDIASKLFADMPEK, DLISWNSMIDGYVKHGRIEDAKGLFDVMPRRDVVT, WATMIDGYAKLGFVHHAKTLFDQMPHR, DVVAYNSMMAGYVQNKYHMEALEIFSDMEKESHLL, DDTTLVIVLPAIAQLGRLSKAIDMHLYIVEKQFYL, GGKLGVALIDMYSKCGSIQHAMLVFEGIENK, SIDHWNAMIGGLAIHGLGESAFDMLLQIERLSLKP, DDITFVGVLNACSHSGLVKEGLLCFELMRRK, and RLQHYGCMVDILSRSGSIELAKNLIEEMPVE. The segment at 521-596 is type E motif; sequence IWRTFLTACS…IPGCSWIELD (76 aa).

The protein belongs to the PPR family. PCMP-E subfamily. Interacts with DYW1.

It is found in the plastid. The protein resides in the chloroplast. Functionally, plays a major role in chloroplast RNA editing. Acts as a site-recognition transacting factor to recruit C-deaminase. Involved in single RNA editing events. Required for the edition of the site 1 of ndhD (ndhD-1 site corresponding to cytidine-2), which is a plastid-encoded subunit of the NADH-plastoquinone oxidoreductase. The interaction with DYW1 is required for its function in editing the ndhD-1 site. This chain is Pentatricopeptide repeat-containing protein At2g45350, chloroplastic (CRR4), found in Arabidopsis thaliana (Mouse-ear cress).